A 505-amino-acid polypeptide reads, in one-letter code: L-amino-acid oxidase (505 aa).

A signal peptide spans 1 to 18; sequence MNVFLMFSLLFLAALGSC. A disulfide bridge links cysteine 28 with cysteine 191. Residues 61-62, 81-82, arginine 89, and 105-108 each bind FAD; these read MS, EA, and GPMR. Arginine 108 is a substrate binding site. N-linked (GlcNAc...) asparagine glycosylation is present at asparagine 190. Histidine 241 is a binding site for substrate. Residue valine 279 participates in FAD binding. A disulfide bond links cysteine 349 and cysteine 430. The N-linked (GlcNAc...) asparagine glycan is linked to asparagine 379. Tyrosine 390 contacts substrate. Residues glutamate 475 and 482–487 each bind FAD; that span reads GWIDST. 482-483 contacts substrate; that stretch reads GW.

Belongs to the flavin monoamine oxidase family. FIG1 subfamily. As to quaternary structure, monomer. This is in contrast with most of its orthologs, that are non-covalently linked homodimers. FAD serves as cofactor. Post-translationally, N-glycosylated. In terms of tissue distribution, expressed by the venom gland.

Its subcellular location is the secreted. The catalysed reaction is an L-alpha-amino acid + O2 + H2O = a 2-oxocarboxylate + H2O2 + NH4(+). It catalyses the reaction L-leucine + O2 + H2O = 4-methyl-2-oxopentanoate + H2O2 + NH4(+). Functionally, catalyzes an oxidative deamination of predominantly hydrophobic and aromatic L-amino acids, thus producing hydrogen peroxide that may contribute to the diverse toxic effects of this enzyme. Shows activity on L-Leu. Exhibits diverse biological activities, such as hemorrhage, edema, antibacterial and antiparasitic activities, as well as regulation of platelet aggregation. Effects of snake L-amino oxidases on platelets are controversial, since they either induce aggregation or inhibit agonist-induced aggregation. These different effects are probably due to different experimental conditions. This protein has an ability to induce hemolysis and apoptosis. The protein is L-amino-acid oxidase of Protobothrops flavoviridis (Habu).